Here is a 467-residue protein sequence, read N- to C-terminus: Fumarate hydratase class II (467 aa).

Substrate contacts are provided by residues 98–100 (SGT), R126, 129–132 (HPND), 139–141 (SSN), and T187. Catalysis depends on H188, which acts as the Proton donor/acceptor. The active site involves S318. Residues S319 and 324 to 326 (KVN) each bind substrate.

The protein belongs to the class-II fumarase/aspartase family. Fumarase subfamily. As to quaternary structure, homotetramer.

Its subcellular location is the cytoplasm. The catalysed reaction is (S)-malate = fumarate + H2O. It participates in carbohydrate metabolism; tricarboxylic acid cycle; (S)-malate from fumarate: step 1/1. Its activity is regulated as follows. Inhibited by ATP, citrate and S-2,3-dicarboxyaziridine. Involved in the TCA cycle. FumC seems to be a backup enzyme for FumA under conditions of iron limitation and oxidative stress. Catalyzes the stereospecific interconversion of fumarate to L-malate. This chain is Fumarate hydratase class II, found in Escherichia coli (strain K12).